We begin with the raw amino-acid sequence, 100 residues long: Small ribosomal subunit protein uS14c (100 aa).

Belongs to the universal ribosomal protein uS14 family. Part of the 30S ribosomal subunit.

The protein localises to the plastid. It is found in the chloroplast. Its function is as follows. Binds 16S rRNA, required for the assembly of 30S particles. This is Small ribosomal subunit protein uS14c from Cyanidium caldarium (Red alga).